We begin with the raw amino-acid sequence, 690 residues long: Crooked neck-like protein 1 (690 aa).

16 HAT repeats span residues 61-93 (DYKL…WEES), 95-127 (KEIQ…MEMK), 129-161 (RQVN…MEEM), 163-194 (GNVA…FELR), 196-227 (KEVE…FEEK), 229-264 (AYFA…FEEN), 266-300 (KEFE…FEKK), 310-342 (IIVS…LVES), 344-378 (AEAD…LWVN), 388-424 (KDPE…FEIR), 459-491 (REFD…LETI), 493-527 (GDIE…FEIE), 529-560 (EETE…FELS), 565-606 (GSVA…EFGT), 608-646 (SDKE…YIFP), and 648-673 (DAAN…EREA). A mediates interaction with HSP90 region spans residues 250-467 (MDEHLYVAFA…LREFDRCRKL (218 aa)). A Phosphoserine modification is found at Ser-342. Residues 618–626 (PEKVKKRRK) carry the Nuclear localization signal motif. Basic and acidic residues predominate over residues 667–679 (QQQEREAAEQDPD). A disordered region spans residues 667–690 (QQQEREAAEQDPDKDIDESESSSF). Acidic residues predominate over residues 680–690 (KDIDESESSSF). Position 689 is a phosphoserine (Ser-689).

Belongs to the crooked-neck family. Identified in the spliceosome C complex. Present in a spliceosome complex assembled in vitro containing CRNKL1, HPRP8BP and SNRPB2. Component of the minor spliceosome, which splices U12-type introns. Interacts with PPIL2 (via the PPIase cyclophilin-type domain); they may form a trimeric complex with HSP90.

Its subcellular location is the nucleus. It localises to the nucleus speckle. In terms of biological role, involved in pre-mRNA splicing process. As a component of the minor spliceosome, involved in the splicing of U12-type introns in pre-mRNAs. In Mus musculus (Mouse), this protein is Crooked neck-like protein 1 (Crnkl1).